The primary structure comprises 85 residues: Beta-insect depressant toxin Lqh-dprIT3d (85 aa).

The signal sequence occupies residues 1–21 (MKLLLLLTISASMLIEGLVNA). An LCN-type CS-alpha/beta domain is found at 22–82 (DGYIRGGDGC…EWDYETNTCG (61 aa)). Cystine bridges form between C31/C81, C35/C56, C42/C63, and C46/C65. G82 carries the post-translational modification Glycine amide.

This sequence belongs to the long (4 C-C) scorpion toxin superfamily. Sodium channel inhibitor family. Beta subfamily. In terms of tissue distribution, expressed by the venom gland.

The protein resides in the secreted. Functionally, depressant insect beta-toxins cause a transient contraction paralysis followed by a slow flaccid paralysis. They bind voltage-independently at site-4 of sodium channels (Nav) and block action potentials, primarily by depolarizing the axonal membrane and suppressing the sodium current. This depressant toxin is active only on insects. It is found in a relatively small amount in the venom, and its activity on insects is 10-fold higher compared to other known depressant toxins. This is Beta-insect depressant toxin Lqh-dprIT3d from Leiurus hebraeus (Hebrew deathstalker scorpion).